Consider the following 1385-residue polypeptide: Pesticidal crystal protein Cry5Aa (1385 aa).

Disordered regions lie at residues 768–799 (NITV…GQYN) and 1359–1385 (PLPT…NNNQ). Residues 782 to 796 (NGGGDGGGNGGGDGG) are compositionally biased toward gly residues. Residues 1370–1385 (NTASSTNSDTSMNNNQ) show a composition bias toward low complexity.

This sequence belongs to the delta endotoxin family.

Its function is as follows. Endotoxin with nematicidal activity. This Bacillus thuringiensis subsp. darmstadiensis protein is Pesticidal crystal protein Cry5Aa (cry5Aa).